The chain runs to 45 residues: MSKRTFQPNNRRRAKKHGFRLRMRTRAGRAILAARRGKGRTELSA.

This sequence belongs to the bacterial ribosomal protein bL34 family.

The chain is Large ribosomal subunit protein bL34 from Arthrobacter sp. (strain FB24).